We begin with the raw amino-acid sequence, 655 residues long: p-hydroxybenzoic acid efflux pump subunit AaeB (655 aa).

The Periplasmic portion of the chain corresponds to 1–12 (MGIFSIANQHIR). A helical transmembrane segment spans residues 13 to 33 (FAVKLATAIVLALFVGFHFQL). Over 34–37 (ETPR) the chain is Cytoplasmic. Residues 38–58 (WAVLTAAIVAAGPAFAAGGEP) traverse the membrane as a helical segment. The Periplasmic segment spans residues 59–68 (YSGAIRYRGF). The chain crosses the membrane as a helical span at residues 69–89 (LRIIGTFIGCIAGLVIIIAMI). At 90–92 (RAP) the chain is on the cytoplasmic side. A helical transmembrane segment spans residues 93–113 (LLMILVCCIWAGFCTWISSLV). The Periplasmic portion of the chain corresponds to 114 to 120 (RIENSYA). Residues 121–141 (WGLAGYTALIIVITIQPEPLL) form a helical membrane-spanning segment. Over 142 to 151 (TPQFAVERCS) the chain is Cytoplasmic. The chain crosses the membrane as a helical span at residues 152–172 (EIVIGIVCAIMADLLFSPRSI). At 173–369 (KQEVDRELES…RTTLSCILGT (197 aa)) the chain is on the periplasmic side. Residues 370–390 (LFWLWTGWTSGSGAMVMIAVV) traverse the membrane as a helical segment. The Cytoplasmic segment spans residues 391–406 (TSLAMRLPNPRMVAID). Residues 407–427 (FIYGTLAALPLGLLYFLVIIP) traverse the membrane as a helical segment. Residues 428-430 (NTQ) lie on the Periplasmic side of the membrane. A helical membrane pass occupies residues 431 to 451 (QSMLLLCISLAVLGFFLGIEV). Residues 452–458 (QKRRLGS) are Cytoplasmic-facing. The helical transmembrane segment at 459–479 (MGALASTINIIVLDNPMTFHF) threads the bilayer. Residues 480 to 481 (SQ) lie on the Periplasmic side of the membrane. A helical transmembrane segment spans residues 482–502 (FLDSALGQIVGCVLAFTVILL). At 503-655 (VRDKSRDRTG…HKYQHALTDS (153 aa)) the chain is on the cytoplasmic side.

The protein belongs to the aromatic acid exporter ArAE (TC 2.A.85) family.

The protein resides in the cell inner membrane. Forms an efflux pump with AaeA. Could function as a metabolic relief valve, allowing to eliminate certain compounds when they accumulate to high levels in the cell. The sequence is that of p-hydroxybenzoic acid efflux pump subunit AaeB from Escherichia coli O6:H1 (strain CFT073 / ATCC 700928 / UPEC).